We begin with the raw amino-acid sequence, 403 residues long: Probable eukaryotic initiation factor 4A (403 aa).

Positions 1–29 (MSQQDRVAPQDQDSFLDDQPGVRPIPSFD) are disordered. The Q motif motif lies at 26–54 (PSFDDMPLHQNLLRGIYSYGFEKPSSIQQ). Residues 57–230 (IAPFTRGGDI…KKFMRDPVRI (174 aa)) form the Helicase ATP-binding domain. 70–77 (AQSGTGKT) contacts ATP. Positions 178-181 (DEAD) match the DEAD box motif. A Helicase C-terminal domain is found at 241–401 (GIKQFFIAVE…ELPVDFAAYL (161 aa)).

The protein belongs to the DEAD box helicase family. eIF4A subfamily. As to quaternary structure, eIF4F is a multi-subunit complex, the composition of which varies with external and internal environmental conditions. It is composed of at least EIF4A, EIF4E and EIF4G.

The catalysed reaction is ATP + H2O = ADP + phosphate + H(+). Its function is as follows. ATP-dependent RNA helicase which is a subunit of the eIF4F complex involved in cap recognition and is required for mRNA binding to ribosome. In the current model of translation initiation, eIF4A unwinds RNA secondary structures in the 5'-UTR of mRNAs which is necessary to allow efficient binding of the small ribosomal subunit, and subsequent scanning for the initiator codon. The chain is Probable eukaryotic initiation factor 4A from Leishmania braziliensis.